Consider the following 470-residue polypeptide: Cell division protein FtsA (470 aa).

Positions 416–470 are disordered; sequence NKKDTHENEVESTDEEIYQSEDNHQEHKQNHEHVQDKDKDKEESKFKKLMKSLFE. Acidic residues predominate over residues 425-434; it reads VESTDEEIYQ. Residues 436-461 show a composition bias toward basic and acidic residues; the sequence is EDNHQEHKQNHEHVQDKDKDKEESKF.

Belongs to the FtsA/MreB family. Self-interacts. Interacts with FtsZ.

The protein localises to the cell membrane. Functionally, cell division protein that is involved in the assembly of the Z ring. May serve as a membrane anchor for the Z ring. The sequence is that of Cell division protein FtsA from Staphylococcus aureus (strain NCTC 8325 / PS 47).